The sequence spans 98 residues: UPF0213 protein LACR_2011 (98 aa).

A GIY-YIG domain is found at 2–79 (NTHFTYVLQC…KLVRQQKLKL (78 aa)).

It belongs to the UPF0213 family.

The sequence is that of UPF0213 protein LACR_2011 from Lactococcus lactis subsp. cremoris (strain SK11).